The following is a 1024-amino-acid chain: E3 ISG15--protein ligase HERC5 (1024 aa).

Residues 1-13 (MERRSRRKSRRNG) are compositionally biased toward basic residues. Residues 1–28 (MERRSRRKSRRNGRSTAGKAAATQPAKS) form a disordered region. RCC1 repeat units follow at residues 96–155 (NMKI…ALSK), 156–208 (GGEL…ALSM), 209–260 (SGNI…LLTQ), 262–312 (GLLF…AYVS), and 314–364 (LGKV…LIMI). An HECT domain is found at 702–1024 (ENEDLRKELW…EAINNNRGFG (323 aa)). The active-site Glycyl thioester intermediate is C994.

In terms of assembly, (Microbial infection) Interacts with human cytomegalovirus protein UL26; this interaction inhibits global protein ISGylation. (Microbial infection) Interacts with Kaposi's sarcoma-associated herpesvirus protein v-IRF1; this interaction inhibits global protein ISGylation. As to quaternary structure, binds to CCNA1, CCNB1, CCND1 and CCNE1. Interacts with UBE2L6. Interacts with IRF3, this interaction is marginal in resting cells but enhanced upon viral infection. Interacts with influenza A virus NS1. In terms of processing, ISGylated. In terms of tissue distribution, expressed in testis and to a lesser degree in brain, ovary and placenta. Found in most tissues at low levels.

It is found in the cytoplasm. Its subcellular location is the perinuclear region. Major E3 ligase for ISG15 conjugation. Acts as a positive regulator of innate antiviral response in cells induced by interferon. Functions as part of the ISGylation machinery that recognizes target proteins in a broad and relatively non-specific manner. Catalyzes ISGylation of IRF3 which results in sustained activation, it attenuates IRF3-PIN1 interaction, which antagonizes IRF3 ubiquitination and degradation, and boosts the antiviral response. Mediates ISGylation of the phosphatase PTEN leading to its degradation, thus alleviating its suppression of the PI3K-AKT signaling pathway and promoting the production of cytokines that facilitate bacterial clearance. Interferes with the function of key viral structural proteins such as ebolavirus structural protein VP40 or HIV-1 protein GAG. Catalyzes ISGylation of influenza A viral NS1 which attenuates virulence; ISGylated NS1 fails to form homodimers and thus to interact with its RNA targets. Catalyzes ISGylation of papillomavirus type 16 L1 protein which results in dominant-negative effect on virus infectivity. Physically associated with polyribosomes, broadly modifies newly synthesized proteins in a cotranslational manner. In an interferon-stimulated cell, newly translated viral proteins are primary targets of ISG15. Promotes parkin/PRKN ubiquitin E3 ligase activity by suppressing the intramolecular interaction that maintains its autoinhibited conformation. In terms of biological role, (Microbial infection) Functions as an E3 ligase for ISGylation of hepatitis B virus protein X leading to enhanced viral replication due to increased interferon resistance. The chain is E3 ISG15--protein ligase HERC5 (HERC5) from Homo sapiens (Human).